A 669-amino-acid chain; its full sequence is Hypoxia-inducible factor 3-alpha (669 aa).

The disordered stretch occupies residues 1–27 (MALGLQRARSTTELRKEKSRDAARSRR). Residues 10–27 (STTELRKEKSRDAARSRR) show a composition bias toward basic and acidic residues. The region spanning 14 to 67 (LRKEKSRDAARSRRSQETEVLYQLAHTLPFARGVSAHLDKASIMRLTISYLRMH) is the bHLH domain. The nuclear localization signal stretch occupies residues 77–100 (QVGAGGEPLDACYLKALEGFVMVL). PAS domains are found at residues 82–154 (GEPL…LSRR) and 227–297 (PHPG…LSKG). Positions 230–274 (GSLEPPLGRGAFLSRHSLDMKFTYCDDRIAEVAGYSPDDLIGCSA) are nuclear export signal. Residues 354 to 389 (EQTEQHSRRPIQRGAPSQKDTPNPGDSLDTPGPRIL) form a disordered region. Positions 414 to 418 (LRRLL) match the LRRLL motif. Over residues 430-444 (TPSTPLATRHPQSPL) the composition is skewed to polar residues. The segment at 430 to 451 (TPSTPLATRHPQSPLSADLPDE) is disordered. The tract at residues 452–581 (LPVGTENVHR…TLAQSSEDED (130 aa)) is ODD. Positions 454-506 (VGTENVHRLFTSGKDTEAVETDLDIAQDADALDLEMLAPYISMDDDFQLNASE) are NTAD. Lys-467 participates in a covalent cross-link: Glycyl lysine isopeptide (Lys-Gly) (interchain with G-Cter in ubiquitin). An LAPYISMD motif is present at residues 490–497 (LAPYISMD). Pro-492 carries the 4-hydroxyproline modification. Disordered regions lie at residues 523-600 (RARS…SPEH) and 619-669 (APGS…AQAD). Low complexity-rich tracts occupy residues 530–541 (LSPPALEPSLLP) and 550–564 (SCSS…ASSP). Lys-570 is covalently cross-linked (Glycyl lysine isopeptide (Lys-Gly) (interchain with G-Cter in ubiquitin)). Residues 629–646 (PLLNLNEPLGLGPSLLSP) show a composition bias toward low complexity.

As to quaternary structure, isoform 2 interacts (via ODD domain) with VHL (via beta domain). Isoform 4 interacts with HIF1A; the interaction inhibits the binding of HIF1A to hypoxia-responsive element (HRE) and HIF1A/ARNT-dependent transcriptional activation. Isoform 4 interacts with ARNT; the interaction occurs in a HIF1A- and DNA-binding-independent manner and does not induce HIF1A/ARNT-dependent transcriptional activation. Isoform 4 interacts with EPAS1. Interacts with BAD, BCL2L2 and MCL1. Post-translationally, in normoxia, hydroxylated on Pro-492 in the oxygen-dependent degradation domain (ODD) by prolyl hydroxylase(s) (PHD). The hydroxylated proline promotes interaction with VHL, initiating rapid ubiquitination and subsequent proteasomal degradation. Ubiquitinated; ubiquitination occurs in a VHL- and oxygen-dependent pathway and subsequently targeted for proteasomal degradation. In terms of tissue distribution, expressed in vascular cells (at protein level). Expressed in kidney. Expressed in lung epithelial cells. Expressed in endothelial cells (venous and arterial cells from umbilical cord and aortic endothelial cells) and in vascular smooth muscle cells (aorta). Strongly expressed in the heart, placenta, and skeletal muscle, whereas a weak expression profile was found in the lung, liver, and kidney. Expressed weakly in cell renal cell carcinoma (CC-RCC) compared to normal renal cells. Expression is down-regulated in numerous kidney tumor cells compared to non tumor kidney tissues. Isoform 2 is expressed in heart, placenta, lung, liver, skeletal muscle and pancreas and in numerous cancer cell lines. Isoform 3 and isoform 4 are weakly expressed in heart, placenta, lung, liver, skeletal muscle and pancreas. Isoform 4 is expressed in fetal tissues, such as heart, brain, thymus, lung, liver, skeletal kidney and spleen. Isoform 3 is weakly expressed in fetal tissues, such as liver and kidney.

The protein localises to the nucleus. The protein resides in the cytoplasm. Its subcellular location is the nucleus speckle. It is found in the mitochondrion. Functionally, acts as a transcriptional regulator in adaptive response to low oxygen tension. Acts as a regulator of hypoxia-inducible gene expression. Functions as an inhibitor of angiogenesis in hypoxic cells of the cornea. Plays a role in the development of the cardiorespiratory system. May also be involved in apoptosis. Attenuates the ability of transcription factor HIF1A to bind to hypoxia-responsive elements (HRE) located within the enhancer/promoter of hypoxia-inducible target genes and hence inhibits HRE-driven transcriptional activation. Also inhibits hypoxia-inducible ARNT-mediated gene expression. In terms of biological role, attenuates the ability of transcription factor HIF1A to bind to hypoxia-responsive elements (HRE) located within the enhancer/promoter of hypoxia-inducible target genes and hence inhibits HRE-driven transcriptional activation. Its function is as follows. Attenuates the ability of transcription factor HIF1A and EPAS1/HIF2A to bind to hypoxia-responsive elements (HRE) located within the enhancer/promoter of hypoxia-inducible target genes and hence inhibits HRE-driven transcriptional activation. May act as a tumor suppressor and inhibits malignant cell transformation. The protein is Hypoxia-inducible factor 3-alpha of Homo sapiens (Human).